The following is a 366-amino-acid chain: Aminomethyltransferase (366 aa).

It belongs to the GcvT family. As to quaternary structure, the glycine cleavage system is composed of four proteins: P, T, L and H.

The catalysed reaction is N(6)-[(R)-S(8)-aminomethyldihydrolipoyl]-L-lysyl-[protein] + (6S)-5,6,7,8-tetrahydrofolate = N(6)-[(R)-dihydrolipoyl]-L-lysyl-[protein] + (6R)-5,10-methylene-5,6,7,8-tetrahydrofolate + NH4(+). The glycine cleavage system catalyzes the degradation of glycine. In Bacillus cereus (strain G9842), this protein is Aminomethyltransferase.